A 154-amino-acid polypeptide reads, in one-letter code: MALNGFGRRVSASVLLIALSLLSGALILPPAAAQRDENYPPPGILKMAKPFHDACVEKTGVTEAAIKEFSDGEIHEDEKLKCYMNCFFHEIEVVDDNGDVHLEKLFATVPLSMRDKLMEMSKGCVHPEGDTLCHKAWWFHQCWKKADPKHYFLP.

Positions 1–33 (MALNGFGRRVSASVLLIALSLLSGALILPPAAA) are cleaved as a signal peptide. Intrachain disulfides connect C55/C86, C82/C133, and C124/C142.

Belongs to the PBP/GOBP family. As to expression, in the ventrolateral region of the antenna, expressed in two distinct types of olfactory hairs: in most sensilla trichodea and in a subset of the small sensilla basiconica (at protein level).

It is found in the secreted. In Drosophila melanogaster (Fruit fly), this protein is General odorant-binding protein 83a (Obp83a).